The following is an 899-amino-acid chain: Conserved oligomeric Golgi complex subunit 3 (899 aa).

Belongs to the COG3 family. As to quaternary structure, component of the conserved oligomeric Golgi complex which is composed of eight different subunits and is required for normal Golgi morphology and localization.

The protein resides in the golgi apparatus membrane. Functionally, involved in ER-Golgi transport. In Aedes aegypti (Yellowfever mosquito), this protein is Conserved oligomeric Golgi complex subunit 3.